Consider the following 209-residue polypeptide: MTGKKRSASSSRWLQEHFSDKYVQQAQKKGLRSRAWFKLDEIQQSDKIFKPGMTIVDLGAAPGGWSQYAVTQIGNSGRIIACDLLPMDPIVGVDFLQGDFRDELVLKALLERVGDSKVQVVMSDMAPNMCGTPAVDIPRAMYLVELALEMSRDVLAPGGSFVVKVFQGEGFDEYLREIRSLFTKVKVRKPDSSRARSREVYIVATGRKP.

S-adenosyl-L-methionine contacts are provided by glycine 63, tryptophan 65, aspartate 83, aspartate 99, and aspartate 124. The Proton acceptor role is filled by lysine 164.

This sequence belongs to the class I-like SAM-binding methyltransferase superfamily. RNA methyltransferase RlmE family.

The protein resides in the cytoplasm. The enzyme catalyses uridine(2552) in 23S rRNA + S-adenosyl-L-methionine = 2'-O-methyluridine(2552) in 23S rRNA + S-adenosyl-L-homocysteine + H(+). Functionally, specifically methylates the uridine in position 2552 of 23S rRNA at the 2'-O position of the ribose in the fully assembled 50S ribosomal subunit. The polypeptide is Ribosomal RNA large subunit methyltransferase E (Klebsiella pneumoniae (strain 342)).